The following is an 882-amino-acid chain: DNA mismatch repair protein MutS (882 aa).

A disordered region spans residues methionine 1–tyrosine 22. Residue glycine 662 to serine 669 participates in ATP binding.

This sequence belongs to the DNA mismatch repair MutS family.

Functionally, this protein is involved in the repair of mismatches in DNA. It is possible that it carries out the mismatch recognition step. This protein has a weak ATPase activity. The sequence is that of DNA mismatch repair protein MutS from Microcystis aeruginosa (strain NIES-843 / IAM M-2473).